The following is a 590-amino-acid chain: Proline--tRNA ligase (590 aa).

It belongs to the class-II aminoacyl-tRNA synthetase family. ProS type 1 subfamily. As to quaternary structure, homodimer.

Its subcellular location is the cytoplasm. The enzyme catalyses tRNA(Pro) + L-proline + ATP = L-prolyl-tRNA(Pro) + AMP + diphosphate. Its function is as follows. Catalyzes the attachment of proline to tRNA(Pro) in a two-step reaction: proline is first activated by ATP to form Pro-AMP and then transferred to the acceptor end of tRNA(Pro). As ProRS can inadvertently accommodate and process non-cognate amino acids such as alanine and cysteine, to avoid such errors it has two additional distinct editing activities against alanine. One activity is designated as 'pretransfer' editing and involves the tRNA(Pro)-independent hydrolysis of activated Ala-AMP. The other activity is designated 'posttransfer' editing and involves deacylation of mischarged Ala-tRNA(Pro). The misacylated Cys-tRNA(Pro) is not edited by ProRS. This chain is Proline--tRNA ligase, found in Clavibacter sepedonicus (Clavibacter michiganensis subsp. sepedonicus).